The primary structure comprises 230 residues: DNA repair protein rdl1 (230 aa).

As to quaternary structure, interacts with rlp1 and sws1.

Its subcellular location is the cytoplasm. The protein localises to the nucleus. Functionally, involved in homologous recombination where it functions at an early stage of recombination in a pre-recombinogenic complex with rlp1 and sws1. Also has a role at a later stage of recombination in association with the rhp55-rhp57 complex. The polypeptide is DNA repair protein rdl1 (rdl1) (Schizosaccharomyces pombe (strain 972 / ATCC 24843) (Fission yeast)).